The sequence spans 388 residues: Fructose-bisphosphate aldolase, chloroplastic (388 aa).

Residues 1-38 (MASATLLKSSFLPKKSEWGATRQAAAPKPVTVSMVVRA) constitute a chloroplast transit peptide. Residue Arg72 participates in substrate binding. The active-site Proton acceptor is the Glu215. The active-site Schiff-base intermediate with dihydroxyacetone-P is the Lys257. Residues 299-301 (SGG) and Arg329 each bind substrate.

Belongs to the class I fructose-bisphosphate aldolase family. Homotetramer. As to expression, expressed in leaf mesophyll cells.

The protein resides in the plastid. The protein localises to the chloroplast. It is found in the plastoglobule. The enzyme catalyses beta-D-fructose 1,6-bisphosphate = D-glyceraldehyde 3-phosphate + dihydroxyacetone phosphate. Its pathway is carbohydrate degradation; glycolysis; D-glyceraldehyde 3-phosphate and glycerone phosphate from D-glucose: step 4/4. Functionally, plays a key role in glycolysis and gluconeogenesis. This is Fructose-bisphosphate aldolase, chloroplastic from Oryza sativa subsp. japonica (Rice).